A 44-amino-acid polypeptide reads, in one-letter code: Alpha-amylase inhibitor magnificamide (44 aa).

3 cysteine pairs are disulfide-bonded: C6-C38, C16-C33, and C20-C39. Residues 7-10 (YIYH) form an inhibitory motif region.

It belongs to the sea anemone alpha-amylase inhibitor family.

The protein localises to the secreted. Mammalian alpha-amylase (AMY2A) inhibitor. The recombinant peptide inhibits porcine pancreatic (Ki=0.17 nM) and human saliva alpha-amylases (Ki=7.7 nM). It does not show antimicrobial (tested on fungi and bacteria) or channel modulating activities (tested on 18 voltage-gated sodium and potassium channles). In Heteractis magnifica (Magnificent sea anemone), this protein is Alpha-amylase inhibitor magnificamide.